The primary structure comprises 62 residues: Photosystem II reaction center protein Z (62 aa).

2 consecutive transmembrane segments (helical) span residues 8-28 (AVFA…VVFA) and 41-61 (FSGT…NSLI).

The protein belongs to the PsbZ family. In terms of assembly, PSII is composed of 1 copy each of membrane proteins PsbA, PsbB, PsbC, PsbD, PsbE, PsbF, PsbH, PsbI, PsbJ, PsbK, PsbL, PsbM, PsbT, PsbY, PsbZ, Psb30/Ycf12, at least 3 peripheral proteins of the oxygen-evolving complex and a large number of cofactors. It forms dimeric complexes.

It is found in the plastid. The protein localises to the chloroplast thylakoid membrane. Functionally, may control the interaction of photosystem II (PSII) cores with the light-harvesting antenna, regulates electron flow through the 2 photosystem reaction centers. PSII is a light-driven water plastoquinone oxidoreductase, using light energy to abstract electrons from H(2)O, generating a proton gradient subsequently used for ATP formation. This chain is Photosystem II reaction center protein Z, found in Phalaenopsis aphrodite subsp. formosana (Moth orchid).